A 375-amino-acid chain; its full sequence is tRNA-specific 2-thiouridylase MnmA (375 aa).

Residues 9-16 (AMSGGVDS) and Leu35 each bind ATP. Cys105 functions as the Nucleophile in the catalytic mechanism. Cysteines 105 and 201 form a disulfide. ATP is bound at residue Gly129. The tract at residues 151 to 153 (KNQ) is interaction with tRNA. Residue Cys201 is the Cysteine persulfide intermediate of the active site. The interaction with tRNA stretch occupies residues 307-308 (RY).

Belongs to the MnmA/TRMU family.

The protein resides in the cytoplasm. The enzyme catalyses S-sulfanyl-L-cysteinyl-[protein] + uridine(34) in tRNA + AH2 + ATP = 2-thiouridine(34) in tRNA + L-cysteinyl-[protein] + A + AMP + diphosphate + H(+). Catalyzes the 2-thiolation of uridine at the wobble position (U34) of tRNA, leading to the formation of s(2)U34. This chain is tRNA-specific 2-thiouridylase MnmA, found in Leptospira interrogans serogroup Icterohaemorrhagiae serovar copenhageni (strain Fiocruz L1-130).